Reading from the N-terminus, the 2221-residue chain is RNA-directed RNA polymerase L (2221 aa).

The endonuclease stretch occupies residues 29 to 292 (KTVLLSQVNF…SERETLIEAE (264 aa)). Mn(2+) is bound by residues Glu-54, Asp-91, and Glu-104. The active site involves Lys-117. The region spanning 1171–1369 (LDMKSVVRLS…YLSSKLNKFI (199 aa)) is the RdRp catalytic domain. A Mg(2+)-binding site is contributed by Asp-1327.

The protein belongs to the Bunyavirales RNA polymerase family. As to quaternary structure, homomultimer; the oligomeric structure is essential for the polymerase activity. Interacts with nucleoprotein N. Interacts with protein Z; this interaction inhibits viral transcription and replication, Z partially blocks the product exit tunnel for the releasing nascent RNA product. It depends on Mn(2+) as a cofactor. Mg(2+) is required as a cofactor.

It localises to the virion. The protein localises to the host cytoplasm. The catalysed reaction is RNA(n) + a ribonucleoside 5'-triphosphate = RNA(n+1) + diphosphate. RNA-dependent RNA polymerase, which is responsible for the replication and transcription of the viral RNA genome using antigenomic RNA as an intermediate. During transcription, synthesizes subgenomic RNAs and assures their capping by a cap-snatching mechanism, which involves the endonuclease activity cleaving the host capped pre-mRNAs. These short capped RNAs are then used as primers for viral transcription. The 3'-end of subgenomic mRNAs molecules are heterogeneous and not polyadenylated. The replicase function is to direct synthesis of antigenomic and genomic RNA which are encapsidated and non capped. As a consequence of the use of the same enzyme for both transcription and replication, these mechanisms need to be well coordinated. These processes may be regulated by proteins N and Z in a dose-dependent manner. Z protein inhibits the viral polymerase L und thus the viral transcription and RNA synthesis. This is RNA-directed RNA polymerase L from Sigmodon hispidus (Hispid cotton rat).